The primary structure comprises 94 residues: Pyrimidine/purine nucleoside phosphorylase (94 aa).

The protein belongs to the nucleoside phosphorylase PpnP family.

It carries out the reaction a purine D-ribonucleoside + phosphate = a purine nucleobase + alpha-D-ribose 1-phosphate. The catalysed reaction is adenosine + phosphate = alpha-D-ribose 1-phosphate + adenine. The enzyme catalyses cytidine + phosphate = cytosine + alpha-D-ribose 1-phosphate. It catalyses the reaction guanosine + phosphate = alpha-D-ribose 1-phosphate + guanine. It carries out the reaction inosine + phosphate = alpha-D-ribose 1-phosphate + hypoxanthine. The catalysed reaction is thymidine + phosphate = 2-deoxy-alpha-D-ribose 1-phosphate + thymine. The enzyme catalyses uridine + phosphate = alpha-D-ribose 1-phosphate + uracil. It catalyses the reaction xanthosine + phosphate = alpha-D-ribose 1-phosphate + xanthine. Its function is as follows. Catalyzes the phosphorolysis of diverse nucleosides, yielding D-ribose 1-phosphate and the respective free bases. Can use uridine, adenosine, guanosine, cytidine, thymidine, inosine and xanthosine as substrates. Also catalyzes the reverse reactions. This Aeromonas hydrophila subsp. hydrophila (strain ATCC 7966 / DSM 30187 / BCRC 13018 / CCUG 14551 / JCM 1027 / KCTC 2358 / NCIMB 9240 / NCTC 8049) protein is Pyrimidine/purine nucleoside phosphorylase.